The chain runs to 126 residues: Holo-[acyl-carrier-protein] synthase (126 aa).

Positions 9 and 58 each coordinate Mg(2+).

The protein belongs to the P-Pant transferase superfamily. AcpS family. The cofactor is Mg(2+).

It localises to the cytoplasm. It carries out the reaction apo-[ACP] + CoA = holo-[ACP] + adenosine 3',5'-bisphosphate + H(+). Functionally, transfers the 4'-phosphopantetheine moiety from coenzyme A to a Ser of acyl-carrier-protein. The sequence is that of Holo-[acyl-carrier-protein] synthase from Escherichia coli O17:K52:H18 (strain UMN026 / ExPEC).